We begin with the raw amino-acid sequence, 519 residues long: Flavonoid 8-hydroxylase 2, chloroplastic (519 aa).

The N-terminal 46 residues, 1 to 46, are a transit peptide targeting the chloroplast; sequence MEVLQASSLSFQLLRRHSRNNLINKFRNPSLPRIHMPRQNIDLKTF. Positions 77–188 constitute a Rieske domain; the sequence is WYPVASVCDL…SCVRNGIVWF (112 aa). [2Fe-2S] cluster is bound by residues cysteine 119, histidine 121, cysteine 139, and histidine 142. Residues histidine 241 and histidine 246 each contribute to the Fe cation site. Positions 447–450 match the Redox-active motif motif; it reads CSSC. Helical transmembrane passes span 462 to 478 and 485 to 501; these read IGLQ…AAAV and YSMV…SKWL.

Requires [2Fe-2S] cluster as cofactor. Glandular trichome-specific expression in leaves.

It localises to the plastid. The protein resides in the chloroplast membrane. The protein localises to the cytoplasm. The catalysed reaction is salvigenin + 2 reduced [2Fe-2S]-[ferredoxin] + O2 + 2 H(+) = 8-hydroxysalvigenin + 2 oxidized [2Fe-2S]-[ferredoxin] + H2O. The protein operates within flavonoid metabolism. Rieske-type, PAO-family oxygenase involved in the biosynthesis of polymethoxylated flavonoids natural products such as nevadensin and salvigenin, aroma compounds which contribute to the flavor of sweet basil, and exhibit pharmacological activities such as anti-allergic, anti-oxidant, antibacterial, anti-proliferative, and anti-inflammatory effects. Catalyzes the hydroxylation of salvigenin to produce 8-hydroxysalvigenin (8-OH-SALV). The protein is Flavonoid 8-hydroxylase 2, chloroplastic of Ocimum basilicum (Sweet basil).